The primary structure comprises 142 residues: Serine/threonine-protein kinase BtrW (142 aa).

It belongs to the anti-sigma-factor family. In terms of assembly, probably able to multimerize; interacts with BtrV.

It carries out the reaction L-seryl-[protein] + ATP = O-phospho-L-seryl-[protein] + ADP + H(+). The enzyme catalyses L-threonyl-[protein] + ATP = O-phospho-L-threonyl-[protein] + ADP + H(+). Possible negative regulator of sigma-B activity. Phosphorylates and inactivates its specific antagonist protein, BtrV. Upon phosphorylation of BtrV, BtrW is released and binds to an unknown partner(s) that might be sigma-B, thereby blocking its ability to form a complex with its partner (possibly an RNA polymerase holoenzyme (E-sigma-B)). Involved in type III secretion system (T3SS). Phosphorylates BtrV. The sequence is that of Serine/threonine-protein kinase BtrW (btrW) from Bordetella bronchiseptica (strain ATCC BAA-588 / NCTC 13252 / RB50) (Alcaligenes bronchisepticus).